A 580-amino-acid chain; its full sequence is Acyl-coenzyme A synthetase ACSM3, mitochondrial (580 aa).

The N-terminal 21 residues, 1-21 (MAMLLRARCFHRLAIPDPRRI), are a transit peptide targeting the mitochondrion. Residues Lys-67 and Lys-100 each carry the N6-succinyllysine modification. Lys-151 is subject to N6-acetyllysine. ATP-binding positions include 229-237 (TSGTTGPPK), 368-373 (EGYGQT), Asp-455, Arg-470, and Lys-566.

This sequence belongs to the ATP-dependent AMP-binding enzyme family. Mg(2+) is required as a cofactor. It depends on Mn(2+) as a cofactor.

The protein localises to the mitochondrion. The protein resides in the mitochondrion matrix. The catalysed reaction is a medium-chain fatty acid + ATP + CoA = a medium-chain fatty acyl-CoA + AMP + diphosphate. The enzyme catalyses propanoate + ATP + CoA = propanoyl-CoA + AMP + diphosphate. It carries out the reaction butanoate + ATP + CoA = butanoyl-CoA + AMP + diphosphate. It catalyses the reaction 2-methylpropanoate + ATP + CoA = 2-methylpropanoyl-CoA + AMP + diphosphate. The catalysed reaction is 2-methylbutanoate + ATP + CoA = 2-methylbutanoyl-CoA + AMP + diphosphate. The enzyme catalyses octanoate + ATP + CoA = octanoyl-CoA + AMP + diphosphate. Catalyzes the activation of fatty acids by CoA to produce an acyl-CoA, the first step in fatty acid metabolism. Capable of activating medium-chain fatty acids with a preference for isobutyrate among fatty acids with 2-6 carbon atoms. In Rattus norvegicus (Rat), this protein is Acyl-coenzyme A synthetase ACSM3, mitochondrial (Acsm3).